The sequence spans 194 residues: Protein GrpE 2 (194 aa).

The span at M1–N17 shows a compositional bias: basic and acidic residues. Positions M1 to V29 are disordered. Positions D18 to V29 are enriched in polar residues.

Belongs to the GrpE family. Homodimer.

It localises to the cytoplasm. Functionally, participates actively in the response to hyperosmotic and heat shock by preventing the aggregation of stress-denatured proteins, in association with DnaK and GrpE. It is the nucleotide exchange factor for DnaK and may function as a thermosensor. Unfolded proteins bind initially to DnaJ; upon interaction with the DnaJ-bound protein, DnaK hydrolyzes its bound ATP, resulting in the formation of a stable complex. GrpE releases ADP from DnaK; ATP binding to DnaK triggers the release of the substrate protein, thus completing the reaction cycle. Several rounds of ATP-dependent interactions between DnaJ, DnaK and GrpE are required for fully efficient folding. The polypeptide is Protein GrpE 2 (Buchnera aphidicola subsp. Baizongia pistaciae (strain Bp)).